Consider the following 268-residue polypeptide: 4-hydroxy-tetrahydrodipicolinate reductase (268 aa).

Residues 10–15 (GASGRM), Asp-36, 99–101 (GTT), and 123–126 (APNM) contribute to the NAD(+) site. His-156 (proton donor/acceptor) is an active-site residue. Residue His-157 participates in (S)-2,3,4,5-tetrahydrodipicolinate binding. Lys-160 serves as the catalytic Proton donor. 166–167 (GT) contacts (S)-2,3,4,5-tetrahydrodipicolinate.

It belongs to the DapB family.

The protein resides in the cytoplasm. The catalysed reaction is (S)-2,3,4,5-tetrahydrodipicolinate + NAD(+) + H2O = (2S,4S)-4-hydroxy-2,3,4,5-tetrahydrodipicolinate + NADH + H(+). It carries out the reaction (S)-2,3,4,5-tetrahydrodipicolinate + NADP(+) + H2O = (2S,4S)-4-hydroxy-2,3,4,5-tetrahydrodipicolinate + NADPH + H(+). It participates in amino-acid biosynthesis; L-lysine biosynthesis via DAP pathway; (S)-tetrahydrodipicolinate from L-aspartate: step 4/4. Its function is as follows. Catalyzes the conversion of 4-hydroxy-tetrahydrodipicolinate (HTPA) to tetrahydrodipicolinate. The polypeptide is 4-hydroxy-tetrahydrodipicolinate reductase (Janthinobacterium sp. (strain Marseille) (Minibacterium massiliensis)).